Reading from the N-terminus, the 185-residue chain is Protein FAM219A (185 aa).

Met1 is subject to N-acetylmethionine. The interval Met1–Ser131 is disordered. Ser47 carries the post-translational modification Phosphoserine. Residues Lys52–Arg61 are compositionally biased toward basic and acidic residues. Over residues Lys66–Lys80 the composition is skewed to polar residues. Residues Ser72 and Ser102 each carry the phosphoserine modification. Thr113 carries the phosphothreonine modification. A phosphoserine mark is found at Ser115 and Ser122. Residues Ser122–Ser131 show a composition bias toward low complexity.

It belongs to the FAM219 family.

In Homo sapiens (Human), this protein is Protein FAM219A (FAM219A).